Consider the following 421-residue polypeptide: Threonylcarbamoyladenosine tRNA methylthiotransferase MtaB (421 aa).

The region spanning 8–121 (GTFKLVCLGC…LIEKIFSYDT (114 aa)) is the MTTase N-terminal domain. Residues Cys17, Cys54, Cys85, Cys145, Cys149, and Cys152 each contribute to the [4Fe-4S] cluster site. A Radical SAM core domain is found at 131 to 358 (FEGKSRAFIK…AEVAKRVGQK (228 aa)).

Belongs to the methylthiotransferase family. MtaB subfamily. Requires [4Fe-4S] cluster as cofactor.

The protein resides in the cytoplasm. It carries out the reaction N(6)-L-threonylcarbamoyladenosine(37) in tRNA + (sulfur carrier)-SH + AH2 + 2 S-adenosyl-L-methionine = 2-methylsulfanyl-N(6)-L-threonylcarbamoyladenosine(37) in tRNA + (sulfur carrier)-H + 5'-deoxyadenosine + L-methionine + A + S-adenosyl-L-homocysteine + 2 H(+). Its function is as follows. Catalyzes the methylthiolation of N6-threonylcarbamoyladenosine (t(6)A), leading to the formation of 2-methylthio-N6-threonylcarbamoyladenosine (ms(2)t(6)A) at position 37 in tRNAs that read codons beginning with adenine. The polypeptide is Threonylcarbamoyladenosine tRNA methylthiotransferase MtaB (mtaB) (Chlamydia pneumoniae (Chlamydophila pneumoniae)).